Here is a 346-residue protein sequence, read N- to C-terminus: Fe(3+) ions import ATP-binding protein FbpC 2 (346 aa).

One can recognise an ABC transporter domain in the interval 2–234; it reads LELHRVSKSF…PNSEDIATFL (233 aa). 34 to 41 contributes to the ATP binding site; that stretch reads GPSGSGKT.

Belongs to the ABC transporter superfamily. Fe(3+) ion importer (TC 3.A.1.10) family. The complex is composed of two ATP-binding proteins (FbpC), two transmembrane proteins (FbpB) and a solute-binding protein (FbpA).

Its subcellular location is the cell inner membrane. It catalyses the reaction Fe(3+)(out) + ATP + H2O = Fe(3+)(in) + ADP + phosphate + H(+). Part of the ABC transporter complex FbpABC involved in Fe(3+) ions import. Responsible for energy coupling to the transport system. This Pectobacterium atrosepticum (strain SCRI 1043 / ATCC BAA-672) (Erwinia carotovora subsp. atroseptica) protein is Fe(3+) ions import ATP-binding protein FbpC 2.